A 156-amino-acid chain; its full sequence is Small ribosomal subunit protein uS7 (156 aa).

It belongs to the universal ribosomal protein uS7 family. In terms of assembly, part of the 30S ribosomal subunit. Contacts proteins S9 and S11.

Functionally, one of the primary rRNA binding proteins, it binds directly to 16S rRNA where it nucleates assembly of the head domain of the 30S subunit. Is located at the subunit interface close to the decoding center, probably blocks exit of the E-site tRNA. The protein is Small ribosomal subunit protein uS7 of Photobacterium profundum (strain SS9).